The chain runs to 129 residues: Phosphoribosyl-AMP cyclohydrolase (129 aa).

Asp85 serves as a coordination point for Mg(2+). Position 86 (Cys86) interacts with Zn(2+). The Mg(2+) site is built by Asp87 and Asp89. Positions 102 and 109 each coordinate Zn(2+).

It belongs to the PRA-CH family. In terms of assembly, homodimer. Mg(2+) is required as a cofactor. Zn(2+) serves as cofactor.

Its subcellular location is the cytoplasm. It carries out the reaction 1-(5-phospho-beta-D-ribosyl)-5'-AMP + H2O = 1-(5-phospho-beta-D-ribosyl)-5-[(5-phospho-beta-D-ribosylamino)methylideneamino]imidazole-4-carboxamide. The protein operates within amino-acid biosynthesis; L-histidine biosynthesis; L-histidine from 5-phospho-alpha-D-ribose 1-diphosphate: step 3/9. In terms of biological role, catalyzes the hydrolysis of the adenine ring of phosphoribosyl-AMP. The polypeptide is Phosphoribosyl-AMP cyclohydrolase (Methanococcus maripaludis (strain C7 / ATCC BAA-1331)).